Reading from the N-terminus, the 129-residue chain is Lysozyme C (129 aa).

The region spanning 1–129 (KIYKRCELAA…VSTWIKDCKL (129 aa)) is the C-type lysozyme domain. Intrachain disulfides connect cysteine 6-cysteine 127, cysteine 30-cysteine 115, cysteine 64-cysteine 80, and cysteine 76-cysteine 94. Active-site residues include glutamate 35 and aspartate 52.

This sequence belongs to the glycosyl hydrolase 22 family. Monomer.

It localises to the secreted. The enzyme catalyses Hydrolysis of (1-&gt;4)-beta-linkages between N-acetylmuramic acid and N-acetyl-D-glucosamine residues in a peptidoglycan and between N-acetyl-D-glucosamine residues in chitodextrins.. Functionally, lysozymes have primarily a bacteriolytic function; those in tissues and body fluids are associated with the monocyte-macrophage system and enhance the activity of immunoagents. This Ortalis vetula (Plain chachalaca) protein is Lysozyme C (LYZ).